Consider the following 523-residue polypeptide: Bifunctional purine biosynthesis protein PurH (523 aa).

Residues 4-152 (DHIRRPIRRA…KNHPSVAVVT (149 aa)) form the MGS-like domain.

The protein belongs to the PurH family.

It catalyses the reaction (6R)-10-formyltetrahydrofolate + 5-amino-1-(5-phospho-beta-D-ribosyl)imidazole-4-carboxamide = 5-formamido-1-(5-phospho-D-ribosyl)imidazole-4-carboxamide + (6S)-5,6,7,8-tetrahydrofolate. The catalysed reaction is IMP + H2O = 5-formamido-1-(5-phospho-D-ribosyl)imidazole-4-carboxamide. It participates in purine metabolism; IMP biosynthesis via de novo pathway; 5-formamido-1-(5-phospho-D-ribosyl)imidazole-4-carboxamide from 5-amino-1-(5-phospho-D-ribosyl)imidazole-4-carboxamide (10-formyl THF route): step 1/1. Its pathway is purine metabolism; IMP biosynthesis via de novo pathway; IMP from 5-formamido-1-(5-phospho-D-ribosyl)imidazole-4-carboxamide: step 1/1. This chain is Bifunctional purine biosynthesis protein PurH, found in Mycobacterium marinum (strain ATCC BAA-535 / M).